Reading from the N-terminus, the 481-residue chain is Regulator of G-protein signaling 1 (481 aa).

Residues 1–31 form a disordered region; that stretch reads MPALHNPSSPPPSYEAVTSYRNGNSIDSGDK. Residues 33–227 are fungal-DR; the sequence is QQCSRLMKIT…SVHEIGKSKN (195 aa). Positions 232-312 constitute a DEP domain; sequence PVYSVSSPSP…KGVSYFLTGK (81 aa). One can recognise an RGS domain in the interval 344–474; sequence ILETILRKPN…AGDSLLKFLE (131 aa).

It localises to the nucleus. The protein resides in the cytoplasm. In terms of biological role, negatively regulates pheromone signaling during mating. Acts in a negative feedback loop that is essential for the mating process. This loop acts to down-regulate cellular sensitivity to pheromone. Activated by ste11. This Schizosaccharomyces pombe (strain 972 / ATCC 24843) (Fission yeast) protein is Regulator of G-protein signaling 1 (rgs1).